Reading from the N-terminus, the 384-residue chain is Putative glycosyltransferase EpsF (384 aa).

Belongs to the glycosyltransferase group 1 family. Glycosyltransferase 4 subfamily.

Its function is as follows. May be involved in the production of the exopolysaccharide (EPS) component of the extracellular matrix during biofilm formation. EPS is responsible for the adhesion of chains of cells into bundles. Required for biofilm maintenance. This is Putative glycosyltransferase EpsF (epsF) from Bacillus subtilis (strain 168).